The chain runs to 257 residues: Putative hydro-lyase Bamb_5282 (257 aa).

It belongs to the D-glutamate cyclase family.

In Burkholderia ambifaria (strain ATCC BAA-244 / DSM 16087 / CCUG 44356 / LMG 19182 / AMMD) (Burkholderia cepacia (strain AMMD)), this protein is Putative hydro-lyase Bamb_5282.